Reading from the N-terminus, the 146-residue chain is Hemoglobin subunit beta-0 (146 aa).

Positions 2–146 constitute a Globin domain; sequence EWTDFERATI…VVSSLGRQYH (145 aa). His-63 and His-92 together coordinate heme b.

The protein belongs to the globin family. As to quaternary structure, heterotetramer of two alpha chains and two beta chains. As to expression, red blood cells.

Its function is as follows. Involved in oxygen transport from gills to the various peripheral tissues. This chain is Hemoglobin subunit beta-0 (hbb0), found in Pagothenia borchgrevinki (Bald rockcod).